The primary structure comprises 1329 residues: Synergin gamma (1329 aa).

Residues 112 to 152 (MQKQFAEEQQKRFEQQQKLLEEERKRRQFEEQKQKLRLLSS) are a coiled coil. The tract at residues 175–211 (GFSRDAKMHPTPASHPKKPDCPTSSHSTKTVSPSSAF) is disordered. A compositionally biased stretch (low complexity) spans 197–209 (TSSHSTKTVSPSS). The EH domain occupies 393 to 504 (NESLVPDAYK…TPVSQPTAMT (112 aa)). Positions 555-559 (DFQDF) match the DFXDF motif 1 motif. The residue at position 571 (serine 571) is a Phosphoserine. The span at 578-594 (VPASSKTSNSQHGNSAP) shows a compositional bias: polar residues. A disordered region spans residues 578–600 (VPASSKTSNSQHGNSAPSLLIPL). Lysine 609 carries the post-translational modification N6-acetyllysine. Residues 614 to 878 (KGISAEKPSE…ADFHSSKFSS (265 aa)) are interaction with AP1G1. Disordered regions lie at residues 661 to 701 (GTDD…TQTQ) and 730 to 753 (AFST…PASL). The residue at position 676 (serine 676) is a Phosphoserine. The segment at 761–773 (LADDFGEFNLFGE) is interaction with AP1G1, AP1G2 and GGA1. The DFXDF motif 2 motif lies at 785–789 (DFADF). Residues 797–835 (IPSEPKADDKYEALREEGSPGALSTSTVEGAHNPPVSSS) form a disordered region. Residues 801-814 (PKADDKYEALREEG) show a composition bias toward basic and acidic residues. Serine 815 is subject to Phosphoserine. Lysine 836 bears the N6-acetyllysine mark. Serine 844 and serine 864 each carry phosphoserine. Disordered stretches follow at residues 856 to 922 (KENT…DSED), 941 to 1042 (HVMS…FGEF), and 1088 to 1113 (SLSL…RDRS). The segment covering 864–873 (SDGDFADFHS) has biased composition (basic and acidic residues). Positions 867-871 (DFADF) match the DFXDF motif 3 motif. Residues 874-883 (SKFSSTSSDK) show a composition bias toward low complexity. Phosphoserine occurs at positions 904, 944, 947, 997, 1021, 1088, 1090, 1102, and 1113. Polar residues predominate over residues 944–955 (SDSSLDLPTVSG). Residues 1016-1028 (ENTCPSPASSVAS) are compositionally biased toward polar residues. The residue at position 1115 (threonine 1115) is a Phosphothreonine.

As to quaternary structure, self-associates. Interacts with GGA1 (via GAE domain). Interacts with GGA2 and GGA3. Interacts with AP1G1 (via GAE domain), a subunit of adapter protein complex AP-1. Interacts with AP1G2 (via GAE domain) a subunit of adapter protein complex AP-1. Component of the aftiphilin/p200/gamma-synergin complex, at least composed of AFTPH/aftiphilin, HEATR5B/p200a and SYNRG/gamma-synergin, which plays a role in the AP1G1/AP-1-mediated trafficking of transferrin from early to recycling endosomes. Within the complex interacts with AFTPH/aftiphilin and HEATR5B/p200a; the interactions are direct. Interacts (via EH domain) with SCAMP1. Detected in brain and liver (at protein level). Ubiquitously expressed.

It localises to the cytoplasm. Its subcellular location is the golgi apparatus. The protein resides in the trans-Golgi network membrane. It is found in the perinuclear region. The protein localises to the cytoplasmic vesicle. It localises to the clathrin-coated vesicle. Plays a role in endocytosis and/or membrane trafficking at the trans-Golgi network (TGN). May act by linking the adapter protein complex AP-1 to other proteins. Component of clathrin-coated vesicles. Component of the aftiphilin/p200/gamma-synergin complex, which plays roles in AP1G1/AP-1-mediated protein trafficking including the trafficking of transferrin from early to recycling endosomes, and the membrane trafficking of furin and the lysosomal enzyme cathepsin D between the trans-Golgi network (TGN) and endosomes. The chain is Synergin gamma (Synrg) from Rattus norvegicus (Rat).